The sequence spans 91 residues: UPF0298 protein OB1449 (91 aa).

Belongs to the UPF0298 family.

The protein resides in the cytoplasm. The chain is UPF0298 protein OB1449 from Oceanobacillus iheyensis (strain DSM 14371 / CIP 107618 / JCM 11309 / KCTC 3954 / HTE831).